A 420-amino-acid polypeptide reads, in one-letter code: UDP-N-acetylglucosamine 1-carboxyvinyltransferase (420 aa).

Residue 22 to 23 (KN) participates in phosphoenolpyruvate binding. Residue Arg92 participates in UDP-N-acetyl-alpha-D-glucosamine binding. The Proton donor role is filled by Cys116. Cys116 carries the post-translational modification 2-(S-cysteinyl)pyruvic acid O-phosphothioketal. Residues 121 to 125 (RPVDQ), Asp304, and Ile326 each bind UDP-N-acetyl-alpha-D-glucosamine.

Belongs to the EPSP synthase family. MurA subfamily.

The protein resides in the cytoplasm. The enzyme catalyses phosphoenolpyruvate + UDP-N-acetyl-alpha-D-glucosamine = UDP-N-acetyl-3-O-(1-carboxyvinyl)-alpha-D-glucosamine + phosphate. Its pathway is cell wall biogenesis; peptidoglycan biosynthesis. Its function is as follows. Cell wall formation. Adds enolpyruvyl to UDP-N-acetylglucosamine. In Paraburkholderia xenovorans (strain LB400), this protein is UDP-N-acetylglucosamine 1-carboxyvinyltransferase.